A 71-amino-acid polypeptide reads, in one-letter code: Alpha-cobratoxin (71 aa).

5 cysteine pairs are disulfide-bonded: C3/C20, C14/C41, C26/C30, C45/C56, and C57/C62.

It belongs to the three-finger toxin family. Long-chain subfamily. Type II alpha-neurotoxin sub-subfamily. As to quaternary structure, monomer, homo- or heterodimer with cytotoxins 1 (P60305), 2 (AC P01445), and 3 (AC P01446); disulfide-linked. In terms of processing, in homodimer alpha-cobratoxin, selective reduction of Cys(26)-Cys(30) in one subunit does not affect the activity against the alpha-7/CHRNA7 nAChR, whereas its reduction in both subunits almost prevents alpha-7/CHRNA7 nAChR recognition. On the contrary, reduction of one or both Cys(26)-Cys(30) disulfide bonds in the homodimer considerably potentiates inhibition of the alpha-3-beta-2/CHRNA3-CHRNB2 nAChR by the toxin. As to expression, expressed by the venom gland.

The protein localises to the secreted. Its function is as follows. Monomer: binds with high affinity to muscular (alpha-1-beta-1-gamma-delta/CHRNA1-CHRNB1-CHRNG-CHRND) nAChR (tested on Torpedo californica, Kd=0.2-4.5 nM) and neuronal alpha-7/CHRNA7 nicotinic acetylcholine receptors (Kd=13-105 nM). Also inhibits GABA(A) channels. Heteropentamer targets studied are composed of alpha-1-beta-3-gamma-2 (GABRA1-GABRB3-GABRG2) subunits (IC(50)=236 nM), alpha-1-beta-2-gamma-2 (GABRA1-GABRB2-GABRG2) subunits (IC(50)=469 nM), alpha-2-beta-2-gamma-2 (GABRA2-GABRB2-GABRG2) subunits (IC(50)=485 nM), alpha-5-beta-3-gamma-2 (GABRA5-GABRB3-GABRG2) subunits (IC(50)=635 nM), and alpha-2-beta-3-gamma-2 (GABRA2-GABRB3-GABRG2) subunits (IC(50)=1099 nM) (activated by 10 uM GABA). Homodimer: binds with high affinity (but lower than the monomeric form) to muscular (IC(50)=9.7 nM) and with low affinity to neuronal alpha-7/CHRNA7 nAChRs (IC(50)=1370 nM). However, it acquires (compared to the monomeric form) the capacity to block alpha-3/beta-2 (CHRNA3/CHRNB2) nAChRs. Functionally, heterodimer with cytotoxin 3 (AC P01446): is slightly more active than the homodimer in inhibiting alpha-7/CHRNA7 nAChR and is considerably more active in blocking the alpha-3-beta-2/CHRNA3-CHRNB2 nAChR. The protein is Alpha-cobratoxin of Naja kaouthia (Monocled cobra).